Reading from the N-terminus, the 443-residue chain is MIQSSSSISQDSLDLPSILSTFSADEPEDEPSPTAVKSTKPQRPTECLICGNSANGHHYDVASCNGCKTFFRRMCVSDRSFECKAKGDCFDLTKRKVPLKCRACRHQKCISVGMNPLAMEVDEKAASSSNFKKLVKRAQDLEPDDDCQVTAVVNKMQIVKPVDSIESKMQNITDMLVYLETKVERFRKSAYNPHWNEFSGLEYLLESECRIGFGDRFGPMPGWPLRRDQLGPPRLPKPPSPGKPRDSQHSQNIKQWFFYNLLTTVEYAKTFMFFHRLSSRDKLILTRHVALACTNLHISYSSIRRNLEVIIEPDGSEPMTFNDTHYSASVMSVAPLIRCQIKNIEYLLLKAIVLCNPAVPDLSAKSQEIISLERVKYADALFNYCLRSRSDGPPHFAQLIQIIDVLERQQRMQKDLHLLLVAPKVAKLPKDLVMRVIEDIMDS.

Residues 1–20 are compositionally biased toward low complexity; the sequence is MIQSSSSISQDSLDLPSILS. The disordered stretch occupies residues 1–40; it reads MIQSSSSISQDSLDLPSILSTFSADEPEDEPSPTAVKSTK. The nuclear receptor DNA-binding region spans 44 to 121; the sequence is PTECLICGNS…VGMNPLAMEV (78 aa). 2 NR C4-type zinc fingers span residues 47 to 67 and 83 to 104; these read CLIC…CNGC and CKAK…CRAC. The region spanning 196–439 is the NR LBD domain; the sequence is NEFSGLEYLL…KDLVMRVIED (244 aa). Residues 225–249 form a disordered region; sequence LRRDQLGPPRLPKPPSPGKPRDSQH. Over residues 233–242 the composition is skewed to pro residues; it reads PRLPKPPSPG.

This sequence belongs to the nuclear hormone receptor family.

It is found in the nucleus. Its function is as follows. Orphan nuclear receptor (Potential). Required for embryonic and larval morphogenesis and probably for seam cell positioning and migration. In Caenorhabditis elegans, this protein is Nuclear hormone receptor family member nhr-60.